Here is a 577-residue protein sequence, read N- to C-terminus: Insulin-like growth factor 2 mRNA-binding protein 1 (577 aa).

2 RRM domains span residues asparagine 2–proline 75 and arginine 81–aspartate 156. Residues serine 12 and serine 73 each carry the phosphoserine modification. Residues aspartate 156–lysine 190 form a disordered region. The residue at position 181 (serine 181) is a Phosphoserine; by MTOR. KH domains follow at residues aspartate 195 to isoleucine 260, glutamate 276 to isoleucine 343, glutamine 405 to isoleucine 470, and lysine 487 to isoleucine 553. The interval isoleucine 312–proline 323 is sufficient for nuclear export. The sufficient for nuclear export stretch occupies residues glutamate 485–proline 495. Threonine 528 carries the phosphothreonine modification.

Belongs to the RRM IMP/VICKZ family. In terms of assembly, can form homodimers and heterodimers with IGF2BP1 and IGF2BP3. Component of the coding region determinant (CRD)-mediated complex, composed of DHX9, HNRNPU, IGF2BP1, SYNCRIP and YBX1. Identified in a mRNP complex, at least composed of DHX9, DDX3X, ELAVL1, HNRNPU, IGF2BP1, ILF3, PABPC1, PCBP2, PTBP2, STAU1, STAU2, SYNCRIP and YBX1. Associates with mRNP complex. Interacts with FMR1. Component of a multisubunit autoregulatory RNP complex (ARC), at least composed of IGF2BP1, PABPC1 and CSDE1. Interacts with AGO1 and AGO2. Interacts, through domains KH3 and KH4, with PABPC1 in an RNA-independent manner. Component of a TAU mRNP complex, at least composed of IGF2BP1, ELAVL4 and G3BP. Interacts with ELAVL4 in an RNA-dependent manner. Associates with microtubules and polysomes. Interacts with ELAVL1 and MATR3. In terms of processing, phosphorylated at Ser-181 by mTORC2 cotranslationally, promoting binding to the 3'-UTR of IGF2 mRNA. Expressed in zygotes and blastocysts (at protein level). Expressed in brain, skeletal muscle, trophoblasts of placenta, oocytes and spermatogonia (at protein level). Expressed in testis and ovary. Following colon injury, expressed in the wound bed mesenchyme during the first phase of repair, probably by colonic mesenchymal stem cells (at protein level).

It localises to the nucleus. The protein localises to the cytoplasm. It is found in the perinuclear region. The protein resides in the P-body. Its subcellular location is the stress granule. It localises to the cell projection. The protein localises to the lamellipodium. It is found in the dendrite. The protein resides in the dendritic spine. Its subcellular location is the growth cone. It localises to the filopodium. The protein localises to the axon. Functionally, RNA-binding factor that recruits target transcripts to cytoplasmic protein-RNA complexes (mRNPs). This transcript 'caging' into mRNPs allows mRNA transport and transient storage. It also modulates the rate and location at which target transcripts encounter the translational apparatus and shields them from endonuclease attacks or microRNA-mediated degradation. Preferentially binds to N6-methyladenosine (m6A)-containing mRNAs and increases their stability. Regulates localized beta-actin/ACTB mRNA translation, a crucial process for cell polarity, cell migration and neurite outgrowth. Co-transcriptionally associates with the ACTB mRNA in the nucleus. This binding involves a conserved 54-nucleotide element in the ACTB mRNA 3'-UTR, known as the 'zipcode'. The RNP thus formed is exported to the cytoplasm, binds to a motor protein and is transported along the cytoskeleton to the cell periphery. During transport, prevents ACTB mRNA from being translated into protein. When the RNP complex reaches its destination near the plasma membrane, IGF2BP1 is phosphorylated. This releases the mRNA, allowing ribosomal 40S and 60S subunits to assemble and initiate ACTB protein synthesis. Monomeric ACTB then assembles into the subcortical actin cytoskeleton. During neuronal development, key regulator of neurite outgrowth, growth cone guidance and neuronal cell migration, presumably through the spatiotemporal fine tuning of protein synthesis, such as that of ACTB. May regulate mRNA transport to activated synapses. Binds to the 3'-UTR of CD44 mRNA and stabilizes it, hence promotes cell adhesion and invadopodia formation in cancer cells. Binds to the oncofetal H19 transcript and regulates its localization. Binds to and stabilizes BTRC/FBW1A mRNA. Binds to the adenine-rich autoregulatory sequence (ARS) located in PABPC1 mRNA and represses its translation. PABPC1 mRNA-binding is stimulated by PABPC1 protein. Prevents BTRC/FBW1A mRNA degradation by disrupting microRNA-dependent interaction with AGO2. During cellular stress, such as oxidative stress or heat shock, stabilizes target mRNAs that are recruited to stress granules, including CD44, IGF2, MAPK4, MYC, PTEN, RAPGEF2 and RPS6KA5 transcripts. Interacts with GAP43 transcript and transports it to axons. Binds to the 3'-UTR of IGF2 mRNA by a mechanism of cooperative and sequential dimerization and regulates IGF2 mRNA subcellular localization and translation. Binds to MYC mRNA, in the coding region instability determinant (CRD) of the open reading frame (ORF), hence prevents MYC cleavage by endonucleases and possibly microRNA targeting to MYC-CRD. Binding to MYC mRNA is enhanced by m6A-modification of the CRD. Binds to and stabilizes ABCB1/MDR-1 mRNA. Binds to the neuron-specific TAU mRNA and regulates its localization. Plays a direct role in the transport and translation of transcripts required for axonal regeneration in adult sensory neurons. During interstinal wound repair, interacts with and stabilizes PTGS2 transcript. PTGS2 mRNA stabilization may be crucial for colonic mucosal wound healing. This chain is Insulin-like growth factor 2 mRNA-binding protein 1 (Igf2bp1), found in Mus musculus (Mouse).